Reading from the N-terminus, the 463-residue chain is Homoserine O-acetyltransferase FUB5 (463 aa).

The AB hydrolase-1 domain maps to 113–436 (NVMIICHALS…VSDDGHDAFL (324 aa)). Serine 211 functions as the Nucleophile in the catalytic mechanism. Over residues 296–312 (RFGRDTGSKKKTQKQES) the composition is skewed to basic and acidic residues. The tract at residues 296 to 331 (RFGRDTGSKKKTQKQESKTLPSNSTPIHSHSGADET) is disordered. Active-site residues include aspartate 403 and histidine 432.

The protein belongs to the AB hydrolase superfamily. MetX family.

It carries out the reaction L-homoserine + acetyl-CoA = O-acetyl-L-homoserine + CoA. The protein operates within mycotoxin biosynthesis. Its function is as follows. Homoserine O-acetyltransferase; part of the gene cluster that mediates the biosynthesis of fusaric acid, a mycotoxin with low to moderate toxicity to animals and humans, but with high phytotoxic properties. L-aspartate is suggested as fusaric acid amino acid precursor that is activated and further processed to O-acetyl-L-homoserine by cluster enzymes aspartate kinase FUB3 and homoserine O-acetyltransferase FUB5, as well as enzymes of the primary metabolism. The polyketide synthase (PKS) FUB1 generates the triketide trans-2-hexenal which is presumptively released by the hydrolase FUB4 and linked to the NRPS-bound amino acid precursor by NAD(P)-dependent dehydrogenase FUB6. FUB1, FUB4, and the non-canonical NRPS Fub8 may form an enzyme complex. Further processing of the NRPS-bound intermediate might be carried out by FUB6 and the sulfhydrylase FUB7, enabling a spontaneous electrocyclization to close the carbon backbone of fusaric acid. Dihydrofusaric acid is likely to be released via reduction by the thioester reductase (TR) domain of FUB8 whereupon the final oxidation to fusaric acid may (also) be performed by the FMN-dependent dehydrogenase FUB9. This Gibberella moniliformis (strain M3125 / FGSC 7600) (Maize ear and stalk rot fungus) protein is Homoserine O-acetyltransferase FUB5.